The following is a 93-amino-acid chain: Insertion element ISR1 uncharacterized 11 kDa protein A1 (93 aa).

Disordered regions lie at residues 14 to 33 and 68 to 93; these read RRAR…QERR and RRRA…SAGR.

The polypeptide is Insertion element ISR1 uncharacterized 11 kDa protein A1 (Rhizobium sp).